Consider the following 365-residue polypeptide: 2-aminoethylphosphonate--pyruvate transaminase (365 aa).

At K194 the chain carries N6-(pyridoxal phosphate)lysine.

Belongs to the class-V pyridoxal-phosphate-dependent aminotransferase family. PhnW subfamily. Homodimer. The cofactor is pyridoxal 5'-phosphate.

It catalyses the reaction (2-aminoethyl)phosphonate + pyruvate = phosphonoacetaldehyde + L-alanine. In terms of biological role, involved in phosphonate degradation. This chain is 2-aminoethylphosphonate--pyruvate transaminase, found in Bacillus cereus (strain Q1).